The following is a 195-amino-acid chain: uncharacterized protein (195 aa).

This is an uncharacterized protein from Acidianus hospitalis (AFV-1).